A 779-amino-acid polypeptide reads, in one-letter code: Chloride channel protein CLC-c (779 aa).

Ser-27 carries the post-translational modification Phosphoserine. 12 helical membrane passes run Thr-92–Leu-112, Phe-142–Ile-162, Ser-190–Gly-210, Met-215–Arg-235, Gly-257–Leu-277, Ala-287–Ile-307, Leu-341–Val-361, Ile-380–Leu-400, Leu-466–Pro-486, Gly-488–Leu-508, Ser-520–Val-540, and Ile-541–Ile-561. The CBS 1 domain occupies Asp-601 to Gln-659. Phosphoserine is present on Ser-672. The CBS 2 domain occupies Ile-713–Pro-777. A helical membrane pass occupies residues His-741–His-761.

Belongs to the chloride channel (TC 2.A.49) family. As to quaternary structure, homodimer. Interacts with PP2A5. Broadly expressed in the plant.

The protein resides in the membrane. Voltage-gated chloride channel. This chain is Chloride channel protein CLC-c (CLC-C), found in Arabidopsis thaliana (Mouse-ear cress).